The primary structure comprises 219 residues: Large ribosomal subunit protein uL3 (219 aa).

Residues Ser140–Arg163 form a disordered region.

Belongs to the universal ribosomal protein uL3 family. Part of the 50S ribosomal subunit. Forms a cluster with proteins L14 and L19.

Functionally, one of the primary rRNA binding proteins, it binds directly near the 3'-end of the 23S rRNA, where it nucleates assembly of the 50S subunit. The polypeptide is Large ribosomal subunit protein uL3 (Leifsonia xyli subsp. xyli (strain CTCB07)).